The sequence spans 102 residues: Large ribosomal subunit protein bL21 (102 aa).

It belongs to the bacterial ribosomal protein bL21 family. As to quaternary structure, part of the 50S ribosomal subunit. Contacts protein L20.

Its function is as follows. This protein binds to 23S rRNA in the presence of protein L20. In Zymomonas mobilis subsp. mobilis (strain ATCC 31821 / ZM4 / CP4), this protein is Large ribosomal subunit protein bL21.